Consider the following 144-residue polypeptide: Probable calcium-binding protein CML31 (144 aa).

EF-hand domains are found at residues 1-31, 32-67, 72-107, and 108-143; these read MAEIFESVDKNKDGKILWDEFAEAIRVFSPQ, ITSEEIDKMFIVLDVDGDGQIDDVEFASCLMVNGGG, EEEVVMKEAFDLYDMDGDGKISASEIHVVLKRLGEK, and HTMEDCVVMVQTVDKDSDGFVNFEEFKIMMNSNKES. Asp45, Asp47, Asp49, Gln51, Glu56, Asp85, Asp87, Asp89, Lys91, Glu96, Asp121, Asp123, Asp125, and Glu132 together coordinate Ca(2+).

Functionally, potential calcium sensor. In Arabidopsis thaliana (Mouse-ear cress), this protein is Probable calcium-binding protein CML31 (CML31).